Consider the following 443-residue polypeptide: Ribosomal protein uS12 methylthiotransferase RimO (443 aa).

One can recognise an MTTase N-terminal domain in the interval 9-119; it reads PKIGMVSLGC…VVSAVHDAAP (111 aa). [4Fe-4S] cluster contacts are provided by Cys-18, Cys-54, Cys-83, Cys-150, Cys-154, and Cys-157. One can recognise a Radical SAM core domain in the interval 136–373; the sequence is LTPRHYSYLK…MEKAAQISEA (238 aa). The region spanning 376–443 is the TRAM domain; the sequence is QAKIGRDIAT…EHDLFGVALS (68 aa).

It belongs to the methylthiotransferase family. RimO subfamily. It depends on [4Fe-4S] cluster as a cofactor.

It is found in the cytoplasm. The enzyme catalyses L-aspartate(89)-[ribosomal protein uS12]-hydrogen + (sulfur carrier)-SH + AH2 + 2 S-adenosyl-L-methionine = 3-methylsulfanyl-L-aspartate(89)-[ribosomal protein uS12]-hydrogen + (sulfur carrier)-H + 5'-deoxyadenosine + L-methionine + A + S-adenosyl-L-homocysteine + 2 H(+). Functionally, catalyzes the methylthiolation of an aspartic acid residue of ribosomal protein uS12. The sequence is that of Ribosomal protein uS12 methylthiotransferase RimO from Zymomonas mobilis subsp. mobilis (strain ATCC 31821 / ZM4 / CP4).